Reading from the N-terminus, the 326-residue chain is Biotin synthase (326 aa).

Positions 51 to 278 constitute a Radical SAM core domain; that stretch reads NRVQVSRLIS…KSFVRLSAGR (228 aa). [4Fe-4S] cluster is bound by residues cysteine 66, cysteine 70, and cysteine 73. Residues cysteine 110, cysteine 141, cysteine 201, and arginine 273 each contribute to the [2Fe-2S] cluster site.

Belongs to the radical SAM superfamily. Biotin synthase family. As to quaternary structure, homodimer. [4Fe-4S] cluster is required as a cofactor. It depends on [2Fe-2S] cluster as a cofactor.

The catalysed reaction is (4R,5S)-dethiobiotin + (sulfur carrier)-SH + 2 reduced [2Fe-2S]-[ferredoxin] + 2 S-adenosyl-L-methionine = (sulfur carrier)-H + biotin + 2 5'-deoxyadenosine + 2 L-methionine + 2 oxidized [2Fe-2S]-[ferredoxin]. Its pathway is cofactor biosynthesis; biotin biosynthesis; biotin from 7,8-diaminononanoate: step 2/2. In terms of biological role, catalyzes the conversion of dethiobiotin (DTB) to biotin by the insertion of a sulfur atom into dethiobiotin via a radical-based mechanism. The polypeptide is Biotin synthase (Paramagnetospirillum magneticum (strain ATCC 700264 / AMB-1) (Magnetospirillum magneticum)).